A 717-amino-acid chain; its full sequence is Pre-mRNA-splicing factor ATP-dependent RNA helicase DEAH10 (717 aa).

Residues 1-29 (MPSMAQGELKSFVQNSRPNPKSPTVSPFS) form a disordered region. Over residues 12–29 (FVQNSRPNPKSPTVSPFS) the composition is skewed to polar residues. Positions 51 to 256 (VEEVQKNDIL…FGGAKAVHVQ (206 aa)) constitute a Helicase ATP-binding domain. ATP is bound at residue 64–71 (GETGSGKT). Positions 162–165 (DEAH) match the DEAH box motif. Residues 278–453 (TLVTIFQIHF…NIILQLKALG (176 aa)) enclose the Helicase C-terminal domain.

Belongs to the DEAD box helicase family. DEAH subfamily. PRP22 sub-subfamily. Widely expressed but spatially and temporally regulated during development.

The protein resides in the nucleus. It is found in the nucleolus. The catalysed reaction is ATP + H2O = ADP + phosphate + H(+). Involved in pre-mRNA splicing. Plays a role during development in processes such as meristem maintenance, leaf morphogenesis and root morphogenesis. This Arabidopsis thaliana (Mouse-ear cress) protein is Pre-mRNA-splicing factor ATP-dependent RNA helicase DEAH10.